A 195-amino-acid chain; its full sequence is Peptidyl-tRNA hydrolase (195 aa).

Y17 lines the tRNA pocket. H22 functions as the Proton acceptor in the catalytic mechanism. Positions 68, 70, and 116 each coordinate tRNA.

This sequence belongs to the PTH family. Monomer.

The protein localises to the cytoplasm. The catalysed reaction is an N-acyl-L-alpha-aminoacyl-tRNA + H2O = an N-acyl-L-amino acid + a tRNA + H(+). Hydrolyzes ribosome-free peptidyl-tRNAs (with 1 or more amino acids incorporated), which drop off the ribosome during protein synthesis, or as a result of ribosome stalling. Functionally, catalyzes the release of premature peptidyl moieties from peptidyl-tRNA molecules trapped in stalled 50S ribosomal subunits, and thus maintains levels of free tRNAs and 50S ribosomes. The protein is Peptidyl-tRNA hydrolase of Shewanella frigidimarina (strain NCIMB 400).